Consider the following 449-residue polypeptide: Chromosomal replication initiator protein DnaA (449 aa).

The tract at residues 1–73 (MDADLKNLWD…ANSIKAVCSK (73 aa)) is domain I, interacts with DnaA modulators. The tract at residues 73 to 110 (KLYTIEFIIMSEIYEKEEIKSSSNQKSKAIVVNDEMSS) is domain II. Residues 111–327 (TLNPKYTFNS…GALIRIIAYS (217 aa)) form a domain III, AAA+ region region. Positions 155, 157, 158, and 159 each coordinate ATP. The domain IV, binds dsDNA stretch occupies residues 328–449 (SLTNREVTVD…NDITKKLTQN (122 aa)).

This sequence belongs to the DnaA family. Oligomerizes as a right-handed, spiral filament on DNA at oriC.

It is found in the cytoplasm. In terms of biological role, plays an essential role in the initiation and regulation of chromosomal replication. ATP-DnaA binds to the origin of replication (oriC) to initiate formation of the DNA replication initiation complex once per cell cycle. Binds the DnaA box (a 9 base pair repeat at the origin) and separates the double-stranded (ds)DNA. Forms a right-handed helical filament on oriC DNA; dsDNA binds to the exterior of the filament while single-stranded (ss)DNA is stabiized in the filament's interior. The ATP-DnaA-oriC complex binds and stabilizes one strand of the AT-rich DNA unwinding element (DUE), permitting loading of DNA polymerase. After initiation quickly degrades to an ADP-DnaA complex that is not apt for DNA replication. Binds acidic phospholipids. The protein is Chromosomal replication initiator protein DnaA of Clostridium beijerinckii (strain ATCC 51743 / NCIMB 8052) (Clostridium acetobutylicum).